Reading from the N-terminus, the 282-residue chain is Bis(5'-nucleosyl)-tetraphosphatase, symmetrical (282 aa).

This sequence belongs to the Ap4A hydrolase family.

It catalyses the reaction P(1),P(4)-bis(5'-adenosyl) tetraphosphate + H2O = 2 ADP + 2 H(+). Functionally, hydrolyzes diadenosine 5',5'''-P1,P4-tetraphosphate to yield ADP. This chain is Bis(5'-nucleosyl)-tetraphosphatase, symmetrical, found in Klebsiella pneumoniae (strain 342).